A 209-amino-acid chain; its full sequence is uncharacterized protein (209 aa).

An N-terminal signal peptide occupies residues 1–17 (MKRLVTGLLALSLFLAA). Residues 17–105 (ACGQDSDQQK…SNNQANNNQK (89 aa)) are disordered. A lipid anchor (N-palmitoyl cysteine) is attached at cysteine 18. Cysteine 18 carries S-diacylglycerol cysteine lipidation. Residues 23–70 (DQQKDGNKEKDDKAKTEQQDKKTNDSSKDKKDNKDDSKDVNKDNKDNS) are compositionally biased toward basic and acidic residues. Over residues 71–105 (ANDNQQQSNSNATNNDQNQTNNNQSSNNQANNNQK) the composition is skewed to low complexity.

Its subcellular location is the cell membrane. This is an uncharacterized protein from Staphylococcus aureus (strain COL).